The chain runs to 145 residues: MAIYGIGTDIVQLSRIAAVLERTGGRFAEKVLGPDELRVFHARRARSEARGIAFLATRFSAKEAFSKAIGLGMHWPMTWRALQTLNQRSGEPYVVASGELADWLAARGITARVTVSDERDYAVSFVVAETDAPPPAPAPVPRTLP.

Mg(2+) contacts are provided by Asp-9 and Glu-63.

The protein belongs to the P-Pant transferase superfamily. AcpS family. Mg(2+) serves as cofactor.

It localises to the cytoplasm. It carries out the reaction apo-[ACP] + CoA = holo-[ACP] + adenosine 3',5'-bisphosphate + H(+). Functionally, transfers the 4'-phosphopantetheine moiety from coenzyme A to a Ser of acyl-carrier-protein. The chain is Holo-[acyl-carrier-protein] synthase from Burkholderia vietnamiensis (strain G4 / LMG 22486) (Burkholderia cepacia (strain R1808)).